Consider the following 194-residue polypeptide: Putative manganese efflux pump MntP (194 aa).

The next 6 membrane-spanning stretches (helical) occupy residues 6–26 (LILV…GLAL), 35–55 (WLFA…GLYL), 66–86 (VAAI…LWEA), 109–129 (GVLG…LDAL), 142–162 (VPLT…LGLL), and 174–194 (RAEL…LVGV).

Belongs to the MntP (TC 9.B.29) family.

Its subcellular location is the cell membrane. Functionally, probably functions as a manganese efflux pump. The polypeptide is Putative manganese efflux pump MntP (Moorella thermoacetica (strain ATCC 39073 / JCM 9320)).